The chain runs to 435 residues: Serine--tRNA ligase (435 aa).

An L-serine-binding site is contributed by threonine 242 to glutamate 244. Arginine 273–glutamate 275 lines the ATP pocket. Glutamate 296 contributes to the L-serine binding site. An ATP-binding site is contributed by glutamate 360–serine 363. Residue serine 396 participates in L-serine binding.

It belongs to the class-II aminoacyl-tRNA synthetase family. Type-1 seryl-tRNA synthetase subfamily. As to quaternary structure, homodimer. The tRNA molecule binds across the dimer.

It localises to the cytoplasm. It carries out the reaction tRNA(Ser) + L-serine + ATP = L-seryl-tRNA(Ser) + AMP + diphosphate + H(+). The enzyme catalyses tRNA(Sec) + L-serine + ATP = L-seryl-tRNA(Sec) + AMP + diphosphate + H(+). The protein operates within aminoacyl-tRNA biosynthesis; selenocysteinyl-tRNA(Sec) biosynthesis; L-seryl-tRNA(Sec) from L-serine and tRNA(Sec): step 1/1. In terms of biological role, catalyzes the attachment of serine to tRNA(Ser). Is also able to aminoacylate tRNA(Sec) with serine, to form the misacylated tRNA L-seryl-tRNA(Sec), which will be further converted into selenocysteinyl-tRNA(Sec). The chain is Serine--tRNA ligase from Vibrio campbellii (strain ATCC BAA-1116).